The primary structure comprises 335 residues: Beta-ketoacyl-[acyl-carrier-protein] synthase III (335 aa).

Active-site residues include C119 and H261. The ACP-binding stretch occupies residues 262-266 (QANQR). Residue N291 is part of the active site.

Belongs to the thiolase-like superfamily. FabH family. In terms of assembly, homodimer.

The protein localises to the cytoplasm. The enzyme catalyses malonyl-[ACP] + acetyl-CoA + H(+) = 3-oxobutanoyl-[ACP] + CO2 + CoA. It participates in lipid metabolism; fatty acid biosynthesis. In terms of biological role, catalyzes the condensation reaction of fatty acid synthesis by the addition to an acyl acceptor of two carbons from malonyl-ACP. Catalyzes the first condensation reaction which initiates fatty acid synthesis and may therefore play a role in governing the total rate of fatty acid production. Possesses both acetoacetyl-ACP synthase and acetyl transacylase activities. Its substrate specificity determines the biosynthesis of branched-chain and/or straight-chain of fatty acids. The protein is Beta-ketoacyl-[acyl-carrier-protein] synthase III of Prochlorococcus marinus (strain MIT 9215).